Here is a 74-residue protein sequence, read N- to C-terminus: UPF0346 protein YozE (74 aa).

Belongs to the UPF0346 family.

The chain is UPF0346 protein YozE (yozE) from Bacillus subtilis (strain 168).